The following is a 428-amino-acid chain: Serine--tRNA ligase (428 aa).

234 to 236 (TAE) serves as a coordination point for L-serine. 265–267 (RRE) is an ATP binding site. Residue Glu-288 coordinates L-serine. 352-355 (EISS) provides a ligand contact to ATP. Position 388 (Ser-388) interacts with L-serine.

This sequence belongs to the class-II aminoacyl-tRNA synthetase family. Type-1 seryl-tRNA synthetase subfamily. In terms of assembly, homodimer. The tRNA molecule binds across the dimer.

Its subcellular location is the cytoplasm. It catalyses the reaction tRNA(Ser) + L-serine + ATP = L-seryl-tRNA(Ser) + AMP + diphosphate + H(+). The catalysed reaction is tRNA(Sec) + L-serine + ATP = L-seryl-tRNA(Sec) + AMP + diphosphate + H(+). It participates in aminoacyl-tRNA biosynthesis; selenocysteinyl-tRNA(Sec) biosynthesis; L-seryl-tRNA(Sec) from L-serine and tRNA(Sec): step 1/1. In terms of biological role, catalyzes the attachment of serine to tRNA(Ser). Is also able to aminoacylate tRNA(Sec) with serine, to form the misacylated tRNA L-seryl-tRNA(Sec), which will be further converted into selenocysteinyl-tRNA(Sec). This is Serine--tRNA ligase from Synechococcus elongatus (strain ATCC 33912 / PCC 7942 / FACHB-805) (Anacystis nidulans R2).